We begin with the raw amino-acid sequence, 425 residues long: Probable sucrose-phosphatase 3a (425 aa).

This sequence belongs to the sucrose phosphatase family. As to quaternary structure, homodimer. Mg(2+) serves as cofactor.

It carries out the reaction sucrose 6(F)-phosphate + H2O = sucrose + phosphate. It functions in the pathway glycan biosynthesis; sucrose biosynthesis; sucrose from D-fructose 6-phosphate and UDP-alpha-D-glucose: step 2/2. Its function is as follows. Catalyzes the final step of sucrose synthesis. The chain is Probable sucrose-phosphatase 3a (SPP3A) from Arabidopsis thaliana (Mouse-ear cress).